The following is a 396-amino-acid chain: 8-amino-7-oxononanoate synthase (396 aa).

Arg21 is a binding site for substrate. 108–109 (GY) is a pyridoxal 5'-phosphate binding site. His133 is a substrate binding site. Positions 179, 207, and 236 each coordinate pyridoxal 5'-phosphate. N6-(pyridoxal phosphate)lysine is present on Lys239. Thr353 lines the substrate pocket.

This sequence belongs to the class-II pyridoxal-phosphate-dependent aminotransferase family. BioF subfamily. Homodimer. Requires pyridoxal 5'-phosphate as cofactor.

It carries out the reaction 6-carboxyhexanoyl-[ACP] + L-alanine + H(+) = (8S)-8-amino-7-oxononanoate + holo-[ACP] + CO2. It participates in cofactor biosynthesis; biotin biosynthesis. Its function is as follows. Catalyzes the decarboxylative condensation of pimeloyl-[acyl-carrier protein] and L-alanine to produce 8-amino-7-oxononanoate (AON), [acyl-carrier protein], and carbon dioxide. This is 8-amino-7-oxononanoate synthase from Hahella chejuensis (strain KCTC 2396).